We begin with the raw amino-acid sequence, 182 residues long: 3-hydroxyanthranilate 3,4-dioxygenase (182 aa).

O2 is bound at residue Arg46. Fe cation-binding residues include His50, Glu56, and His96. Glu56 is a binding site for substrate. Substrate is bound by residues Arg100 and Glu111. The Fe cation site is built by Cys126, Cys129, Cys163, and Cys166.

It belongs to the 3-HAO family. Homodimer. Requires Fe(2+) as cofactor.

It catalyses the reaction 3-hydroxyanthranilate + O2 = (2Z,4Z)-2-amino-3-carboxymuconate 6-semialdehyde. Its pathway is cofactor biosynthesis; NAD(+) biosynthesis; quinolinate from L-kynurenine: step 3/3. In terms of biological role, catalyzes the oxidative ring opening of 3-hydroxyanthranilate to 2-amino-3-carboxymuconate semialdehyde, which spontaneously cyclizes to quinolinate. The chain is 3-hydroxyanthranilate 3,4-dioxygenase from Brucella anthropi (strain ATCC 49188 / DSM 6882 / CCUG 24695 / JCM 21032 / LMG 3331 / NBRC 15819 / NCTC 12168 / Alc 37) (Ochrobactrum anthropi).